The chain runs to 225 residues: GTP cyclohydrolase III (225 aa).

It belongs to the archaeal-type GTP cyclohydrolase family.

The catalysed reaction is GTP + 3 H2O = 2-amino-5-formylamino-6-(5-phospho-D-ribosylamino)pyrimidin-4(3H)-one + 2 phosphate + 2 H(+). Catalyzes the formation of 2-amino-5-formylamino-6-ribofuranosylamino-4(3H)-pyrimidinone ribonucleotide monophosphate and inorganic phosphate from GTP. Also has an independent pyrophosphate phosphohydrolase activity. This is GTP cyclohydrolase III from Sulfurisphaera tokodaii (strain DSM 16993 / JCM 10545 / NBRC 100140 / 7) (Sulfolobus tokodaii).